Consider the following 459-residue polypeptide: MSNFAIILAAGKGTRMKSDLPKVLHKVAGISMLEHVFRSVGAIQPEKTVTVVGHKAELVEEVLAGQTEFVTQSEQLGTGHAVMMTEPILEGLSGHTLVIAGDTPLITGESLKNLIDFHINHKNVATILTAETDNPFGYGRIVRNDNAEVLRIVEQKDATDFEKQIKEINTGTYVFDNERLFEALKNINTNNAQGEYYITDVIGIFRETGEKVGAYTLKDFDESLGVNDRVALATAESVMRRRINHKHMVNGVSFVNPEATYIDIDVEIAPEVQIEANVTLKGQTKIGAETVLTNGTYVVDSTIGAGAVITNSMIEESSVADGVTVGPYAHIRPNSSLGAQVHIGNFVEVKGSSIGENTKAGHLTYIGNCEVGSNVNFGAGTITVNYDGKNKYKTVIGDNVFVGSNSTIIAPVELGDNSLVGAGSTITKDVPADAIAIGRGRQINKDEYATRLPHHPKNQ.

The interval 1–229 (MSNFAIILAA…FDESLGVNDR (229 aa)) is pyrophosphorylase. UDP-N-acetyl-alpha-D-glucosamine is bound by residues 8-11 (LAAG), K22, Q72, and 77-78 (GT). D102 lines the Mg(2+) pocket. Residues G139, E154, N169, and N227 each contribute to the UDP-N-acetyl-alpha-D-glucosamine site. Residue N227 participates in Mg(2+) binding. The segment at 230–250 (VALATAESVMRRRINHKHMVN) is linker. The interval 251–459 (GVSFVNPEAT…TRLPHHPKNQ (209 aa)) is N-acetyltransferase. Residues R332 and K350 each coordinate UDP-N-acetyl-alpha-D-glucosamine. The active-site Proton acceptor is H362. Residues Y365 and N376 each contribute to the UDP-N-acetyl-alpha-D-glucosamine site. Acetyl-CoA is bound by residues A379, 385–386 (NY), S404, A422, and R439.

The protein in the N-terminal section; belongs to the N-acetylglucosamine-1-phosphate uridyltransferase family. In the C-terminal section; belongs to the transferase hexapeptide repeat family. Homotrimer. It depends on Mg(2+) as a cofactor.

It localises to the cytoplasm. It carries out the reaction alpha-D-glucosamine 1-phosphate + acetyl-CoA = N-acetyl-alpha-D-glucosamine 1-phosphate + CoA + H(+). The catalysed reaction is N-acetyl-alpha-D-glucosamine 1-phosphate + UTP + H(+) = UDP-N-acetyl-alpha-D-glucosamine + diphosphate. It participates in nucleotide-sugar biosynthesis; UDP-N-acetyl-alpha-D-glucosamine biosynthesis; N-acetyl-alpha-D-glucosamine 1-phosphate from alpha-D-glucosamine 6-phosphate (route II): step 2/2. It functions in the pathway nucleotide-sugar biosynthesis; UDP-N-acetyl-alpha-D-glucosamine biosynthesis; UDP-N-acetyl-alpha-D-glucosamine from N-acetyl-alpha-D-glucosamine 1-phosphate: step 1/1. Its pathway is bacterial outer membrane biogenesis; LPS lipid A biosynthesis. Catalyzes the last two sequential reactions in the de novo biosynthetic pathway for UDP-N-acetylglucosamine (UDP-GlcNAc). The C-terminal domain catalyzes the transfer of acetyl group from acetyl coenzyme A to glucosamine-1-phosphate (GlcN-1-P) to produce N-acetylglucosamine-1-phosphate (GlcNAc-1-P), which is converted into UDP-GlcNAc by the transfer of uridine 5-monophosphate (from uridine 5-triphosphate), a reaction catalyzed by the N-terminal domain. This chain is Bifunctional protein GlmU, found in Streptococcus pneumoniae (strain Hungary19A-6).